The primary structure comprises 341 residues: L-threonine 3-dehydrogenase (341 aa).

Cys-38 is a binding site for Zn(2+). Active-site charge relay system residues include Thr-40 and His-43. Positions 63, 64, 93, 96, 99, and 107 each coordinate Zn(2+). NAD(+)-binding positions include Ile-175, Asp-195, Arg-200, 262–264 (LGI), and 286–287 (IY).

This sequence belongs to the zinc-containing alcohol dehydrogenase family. Homotetramer. It depends on Zn(2+) as a cofactor.

It is found in the cytoplasm. The enzyme catalyses L-threonine + NAD(+) = (2S)-2-amino-3-oxobutanoate + NADH + H(+). Its pathway is amino-acid degradation; L-threonine degradation via oxydo-reductase pathway; glycine from L-threonine: step 1/2. Functionally, catalyzes the NAD(+)-dependent oxidation of L-threonine to 2-amino-3-ketobutyrate. In Alteromonas mediterranea (strain DSM 17117 / CIP 110805 / LMG 28347 / Deep ecotype), this protein is L-threonine 3-dehydrogenase.